The chain runs to 417 residues: Gamma-glutamyl phosphate reductase (417 aa).

It belongs to the gamma-glutamyl phosphate reductase family.

It is found in the cytoplasm. The enzyme catalyses L-glutamate 5-semialdehyde + phosphate + NADP(+) = L-glutamyl 5-phosphate + NADPH + H(+). Its pathway is amino-acid biosynthesis; L-proline biosynthesis; L-glutamate 5-semialdehyde from L-glutamate: step 2/2. Its function is as follows. Catalyzes the NADPH-dependent reduction of L-glutamate 5-phosphate into L-glutamate 5-semialdehyde and phosphate. The product spontaneously undergoes cyclization to form 1-pyrroline-5-carboxylate. The chain is Gamma-glutamyl phosphate reductase from Escherichia coli O81 (strain ED1a).